The sequence spans 500 residues: ATP synthase subunit beta (500 aa).

Residue 155–162 coordinates ATP; sequence GGAGVGKT.

Belongs to the ATPase alpha/beta chains family. F-type ATPases have 2 components, CF(1) - the catalytic core - and CF(0) - the membrane proton channel. CF(1) has five subunits: alpha(3), beta(3), gamma(1), delta(1), epsilon(1). CF(0) has three main subunits: a(1), b(2) and c(9-12). The alpha and beta chains form an alternating ring which encloses part of the gamma chain. CF(1) is attached to CF(0) by a central stalk formed by the gamma and epsilon chains, while a peripheral stalk is formed by the delta and b chains.

The protein resides in the cell inner membrane. The catalysed reaction is ATP + H2O + 4 H(+)(in) = ADP + phosphate + 5 H(+)(out). Its function is as follows. Produces ATP from ADP in the presence of a proton gradient across the membrane. The catalytic sites are hosted primarily by the beta subunits. This is ATP synthase subunit beta from Azobacteroides pseudotrichonymphae genomovar. CFP2.